A 279-amino-acid polypeptide reads, in one-letter code: Putative carbamate hydrolase RutD (279 aa).

The 104-residue stretch at 23 to 126 (PVVVLISGLG…LVSVNGWLRI (104 aa)) folds into the AB hydrolase-1 domain.

It belongs to the AB hydrolase superfamily. Hydrolase RutD family.

The catalysed reaction is carbamate + 2 H(+) = NH4(+) + CO2. Its function is as follows. Involved in pyrimidine catabolism. May facilitate the hydrolysis of carbamate, a reaction that can also occur spontaneously. This is Putative carbamate hydrolase RutD from Escherichia coli O17:K52:H18 (strain UMN026 / ExPEC).